Consider the following 957-residue polypeptide: Glycine dehydrogenase (decarboxylating) (957 aa).

K708 carries the post-translational modification N6-(pyridoxal phosphate)lysine.

The protein belongs to the GcvP family. The glycine cleavage system is composed of four proteins: P, T, L and H. Requires pyridoxal 5'-phosphate as cofactor.

The catalysed reaction is N(6)-[(R)-lipoyl]-L-lysyl-[glycine-cleavage complex H protein] + glycine + H(+) = N(6)-[(R)-S(8)-aminomethyldihydrolipoyl]-L-lysyl-[glycine-cleavage complex H protein] + CO2. Functionally, the glycine cleavage system catalyzes the degradation of glycine. The P protein binds the alpha-amino group of glycine through its pyridoxal phosphate cofactor; CO(2) is released and the remaining methylamine moiety is then transferred to the lipoamide cofactor of the H protein. In Escherichia coli (strain SE11), this protein is Glycine dehydrogenase (decarboxylating).